The chain runs to 553 residues: Putative transport protein YidE (553 aa).

The next 5 membrane-spanning stretches (helical) occupy residues 4-24 (IALT…IGNI), 28-48 (GVGF…HFVD), 65-85 (FGLI…FFAS), 95-115 (LFAV…HKIF), and 158-178 (MSYA…MWLM). 2 consecutive RCK C-terminal domains span residues 192-276 (KHES…VIGK) and 279-361 (DTSL…VVGN). A run of 6 helical transmembrane segments spans residues 371–391 (MLPV…PLFV), 393–413 (GFPV…ALIL), 437–457 (LGIV…FVDT), 464–484 (LSWI…VGLL), 493–513 (YLTL…LAFA), and 533–553 (LVMF…WGMG).

It belongs to the AAE transporter (TC 2.A.81) family. YidE subfamily.

It is found in the cell membrane. In Salmonella newport (strain SL254), this protein is Putative transport protein YidE.